The sequence spans 257 residues: Capsid protein (257 aa).

Positions 3-20 match the Bipartite nuclear localization signal motif; the sequence is KRTGDILISTPVSKVRRK. The short motif at 40–54 is the Nuclear localization signal element; sequence KRRSWTYRPMYRKPR. A zinc finger spans residues 68–85; it reads CEGPCKVQSYEQRDDVKH. The Nuclear export signal motif lies at 101–122; it reads ITHRVGKRFCIKSIYILGKIWM. The Bipartite nuclear localization signal signature appears at 201-248; that stretch reads KRFFKVNTHVVYNHQEQAKYENHTENALLLYMACTHASNPVYATLKIR.

It belongs to the geminiviridae capsid protein family. In terms of assembly, homomultimer. Binds to single-stranded and double-stranded viral DNA. Interacts (via nuclear localization signals) with host importin alpha-1a.

The protein resides in the virion. It is found in the host nucleus. In terms of biological role, encapsidates the viral genome into characteristic twinned ('geminate') particles. Binds the genomic viral ssDNA and shuttles it into and out of the cell nucleus. Plays a role in protection of the genome from degradation, virus acquisition and transmission by insect vectors, infectivity, and systemic movement. The CP of monopartite geminiviruses is absolutely essential for virus movement. The sequence is that of Capsid protein from Tomato yellow leaf curl Sardinia virus (isolate Spain-1) (TYLCSV).